Here is a 220-residue protein sequence, read N- to C-terminus: MEKTVIYLLEDGYVDFVVEKIRTKMEKLLEEKDKIFVVLAGGRTPLPVYEKLAEQKFPWNRIHFFLSDERYVPLDSDQSNFRNINEVLFSRAKIPSGNVHYVDTSLPIEKACEKYEREIRSATDQFDLAILGMGPDGHVASIFDLETGNKDNLVTFTDPSGDPKVPRVTLTFRALNTSLYVLFLIRGKEKINRLTEILKDTPLPAYFVRGKEKTVWFVGK.

This sequence belongs to the glucosamine/galactosamine-6-phosphate isomerase family. 6-phosphogluconolactonase subfamily.

It carries out the reaction 6-phospho-D-glucono-1,5-lactone + H2O = 6-phospho-D-gluconate + H(+). It functions in the pathway carbohydrate degradation; pentose phosphate pathway; D-ribulose 5-phosphate from D-glucose 6-phosphate (oxidative stage): step 2/3. In terms of biological role, hydrolysis of 6-phosphogluconolactone to 6-phosphogluconate. The polypeptide is 6-phosphogluconolactonase (pgl) (Thermotoga maritima (strain ATCC 43589 / DSM 3109 / JCM 10099 / NBRC 100826 / MSB8)).